Reading from the N-terminus, the 110-residue chain is Large ribosomal subunit protein P1 (110 aa).

A2 is modified (blocked amino end (Ala)). Residues 69-83 (AAPAAGGAAAATEAP) are compositionally biased toward low complexity. Residues 69–110 (AAPAAGGAAAATEAPAAKEEKKEEKKEESEEEDEDMGFGLFD) form a disordered region. The segment covering 84–96 (AAKEEKKEEKKEE) has biased composition (basic and acidic residues). Phosphoserine; in form eL12'-P is present on S97.

Part of the ribosomal stalk of the large ribosomal subunit; P1 and P2 exist as dimers which assemble on the P0 scaffold. In terms of processing, phosphorylation of Ser-97 converts eL12' to eL12'-P.

In terms of biological role, plays an important role in the elongation step of protein synthesis. The polypeptide is Large ribosomal subunit protein P1 (Artemia salina (Brine shrimp)).